A 154-amino-acid polypeptide reads, in one-letter code: uncharacterized protein (154 aa).

The next 4 helical transmembrane spans lie at 15–37 (DFSF…ALIT), 58–80 (FAAM…WLWG), 95–116 (LGAL…FAFT), and 123–145 (LVIS…FVPH).

It localises to the cell membrane. This is an uncharacterized protein from Archaeoglobus fulgidus (strain ATCC 49558 / DSM 4304 / JCM 9628 / NBRC 100126 / VC-16).